We begin with the raw amino-acid sequence, 481 residues long: MKNAPVDTQSDAATSFEGTAANPQWGGRFASGPAAIMGEINASIGFDKILWRQDIRGSLAHAAMLQKVGLLTETELAEIRQGLGDIAQEIGEGRFEFSPALEDIHMNIEARLSERIGEAGKRLHTARSRNDQVATDFRLWVRDAIDGLQEQTASLMRSLATRALEHAATPMPGFTHLQVAQPVTFGHHLLAYVEMLSRDRGRLRDARARLNECPLGSAALAGTSFPIDRRMTAAALDFDRPTANSLDAVSDRDFALEFLSALSLQAMHLSRLAEEIVMWASAPFGFITLSDAFTTGSSIMPQKRNPDAAELVRAKIGRIMGDFVGLLTVMKGLPLAYAKDTQEDKEPVFDATEAMTLSLAAMDGMIRDLKANTTRMRAVAGMGFSTATDLADWLVRELRVPFRTAHHVTGRLVGMAEQKGCDLADLSLEEMQSVEPQINAGVFDVLTVEASLASRTSEGGTAPANVKHQAESWLAKLGETA.

Over residues 1–17 (MKNAPVDTQSDAATSFE) the composition is skewed to polar residues. The tract at residues 1-25 (MKNAPVDTQSDAATSFEGTAANPQW) is disordered.

The protein belongs to the lyase 1 family. Argininosuccinate lyase subfamily.

The protein localises to the cytoplasm. The enzyme catalyses 2-(N(omega)-L-arginino)succinate = fumarate + L-arginine. Its pathway is amino-acid biosynthesis; L-arginine biosynthesis; L-arginine from L-ornithine and carbamoyl phosphate: step 3/3. In Gluconobacter oxydans (strain 621H) (Gluconobacter suboxydans), this protein is Argininosuccinate lyase.